A 503-amino-acid chain; its full sequence is Probable cytosol aminopeptidase (503 aa).

Positions 270 and 275 each coordinate Mn(2+). K282 is a catalytic residue. Mn(2+)-binding residues include D293, D352, and E354. R356 is a catalytic residue.

It belongs to the peptidase M17 family. The cofactor is Mn(2+).

The protein resides in the cytoplasm. The enzyme catalyses Release of an N-terminal amino acid, Xaa-|-Yaa-, in which Xaa is preferably Leu, but may be other amino acids including Pro although not Arg or Lys, and Yaa may be Pro. Amino acid amides and methyl esters are also readily hydrolyzed, but rates on arylamides are exceedingly low.. It catalyses the reaction Release of an N-terminal amino acid, preferentially leucine, but not glutamic or aspartic acids.. Presumably involved in the processing and regular turnover of intracellular proteins. Catalyzes the removal of unsubstituted N-terminal amino acids from various peptides. The protein is Probable cytosol aminopeptidase of Pectobacterium atrosepticum (strain SCRI 1043 / ATCC BAA-672) (Erwinia carotovora subsp. atroseptica).